The chain runs to 98 residues: NADH-ubiquinone oxidoreductase chain 4L (98 aa).

Helical transmembrane passes span 1–21, 28–48, and 59–79; these read MTSI…GVLV, STLL…ALLI, and APLI…ALLV.

The protein belongs to the complex I subunit 4L family. As to quaternary structure, core subunit of respiratory chain NADH dehydrogenase (Complex I) which is composed of 45 different subunits.

Its subcellular location is the mitochondrion inner membrane. The catalysed reaction is a ubiquinone + NADH + 5 H(+)(in) = a ubiquinol + NAD(+) + 4 H(+)(out). Core subunit of the mitochondrial membrane respiratory chain NADH dehydrogenase (Complex I) which catalyzes electron transfer from NADH through the respiratory chain, using ubiquinone as an electron acceptor. Part of the enzyme membrane arm which is embedded in the lipid bilayer and involved in proton translocation. The protein is NADH-ubiquinone oxidoreductase chain 4L (MT-ND4L) of Dactylopsila trivirgata (Striped possum).